We begin with the raw amino-acid sequence, 367 residues long: Probable outer membrane usher protein LpfC (367 aa).

Positions 1 to 30 (MSRKTVSRTFSSFSISVVAVAVASTFSAHA) are cleaved as a signal peptide.

It belongs to the fimbrial export usher family.

The protein resides in the cell outer membrane. In terms of biological role, part of the lpfABCC'DE fimbrial operon. LP fimbriae may participate in the interaction with eukaryotic cells by assisting in microcolony formation. Could be involved in the export and assembly of the fimbrial subunits across the outer membrane. The sequence is that of Probable outer membrane usher protein LpfC (lpfC) from Escherichia coli O157:H7.